A 385-amino-acid chain; its full sequence is Lipid-A-disaccharide synthase (385 aa).

It belongs to the LpxB family.

The enzyme catalyses 2-N,3-O-bis[(3R)-3-hydroxytetradecanoyl]-alpha-D-glucosaminyl 1-phosphate + UDP-2-N,3-O-bis[(3R)-3-hydroxytetradecanoyl]-alpha-D-glucosamine = lipid A disaccharide (E. coli) + UDP + H(+). The catalysed reaction is a lipid X + a UDP-2-N,3-O-bis[(3R)-3-hydroxyacyl]-alpha-D-glucosamine = a lipid A disaccharide + UDP + H(+). The protein operates within glycolipid biosynthesis; lipid IV(A) biosynthesis; lipid IV(A) from (3R)-3-hydroxytetradecanoyl-[acyl-carrier-protein] and UDP-N-acetyl-alpha-D-glucosamine: step 5/6. Its function is as follows. Condensation of UDP-2,3-diacylglucosamine and 2,3-diacylglucosamine-1-phosphate to form lipid A disaccharide, a precursor of lipid A, a phosphorylated glycolipid that anchors the lipopolysaccharide to the outer membrane of the cell. The protein is Lipid-A-disaccharide synthase of Wigglesworthia glossinidia brevipalpis.